A 239-amino-acid polypeptide reads, in one-letter code: Cysteine-rich venom protein ENH1 (239 aa).

The first 18 residues, 1–18 (MIVFILLSLAAVLQQFVA), serve as a signal peptide directing secretion. The SCP domain maps to 37-165 (VDMHNSFRRS…PYNYFYVCQY (129 aa)). Cystine bridges form between Cys-74-Cys-152, Cys-91-Cys-166, Cys-147-Cys-163, Cys-185-Cys-192, Cys-188-Cys-197, Cys-210-Cys-228, and Cys-219-Cys-232. Positions 201–234 (CPITNTFTNCDSLLQQNSCEDSYIKTNCGASCFC) constitute a ShKT domain.

It belongs to the CRISP family. As to expression, expressed by the venom gland.

The protein resides in the secreted. Its function is as follows. Blocks contraction of smooth muscle elicited by high potassium-induced depolarization, but does not block caffeine-stimulated contraction. May target voltage-gated calcium channels on smooth muscle. The chain is Cysteine-rich venom protein ENH1 from Pseudoferania polylepis (Macleay's water snake).